The chain runs to 119 residues: NLLQFGFMIRCANRRSRPVWHYMDYGCYCGKGGSGTPVDDLDRCCQVHDECYGEAVRRFGCAPYWTLYSWKCYGKAPTCNTKTRCQRFVCRCDAKAAECFARSPYQNSNWNINTKARCR.

7 disulfide bridges follow: Cys-11–Cys-72, Cys-27–Cys-118, Cys-29–Cys-45, Cys-44–Cys-99, Cys-51–Cys-92, Cys-61–Cys-85, and Cys-79–Cys-90. Positions 28, 30, and 32 each coordinate Ca(2+). His-48 is a catalytic residue. A Ca(2+)-binding site is contributed by Asp-49. Residue Asp-93 is part of the active site.

The protein belongs to the phospholipase A2 family. Group I subfamily. D49 sub-subfamily. Heterotrimer of alpha, beta, and gamma chains; non-covalently linked. Requires Ca(2+) as cofactor. In terms of tissue distribution, expressed by the venom gland.

It localises to the secreted. It catalyses the reaction a 1,2-diacyl-sn-glycero-3-phosphocholine + H2O = a 1-acyl-sn-glycero-3-phosphocholine + a fatty acid + H(+). Its function is as follows. Heterotrimer: Snake venom phospholipase A2 (PLA2) heterotrimer that acts as a potent presynaptic neurotoxin by blocking synaptic transmission and synaptic vesicle recycling. May act by binding in a calcium-dependent fashion to neurotonal pentraxin-1 (NPTX1) and neurotonal pentraxin-2 (NPTX2), but not to neuronal pentraxin receptor (NPTXR). Also binds to taipoxin-associated calcium binding protein 49 (RCN2), a protein localized in the lumen of endoplasmic reticulum. In terms of biological role, monomer (alpha chain): Snake venom phospholipase A2 (PLA2) alpha chain that possesses the same high enzymatic activity as the heterotrimer. PLA2 catalyzes the calcium-dependent hydrolysis of the 2-acyl groups in 3-sn-phosphoglycerides. This Oxyuranus scutellatus scutellatus (Australian taipan) protein is Basic phospholipase A2 taipoxin alpha chain.